The chain runs to 154 residues: SsrA-binding protein (154 aa).

This sequence belongs to the SmpB family.

It is found in the cytoplasm. Functionally, required for rescue of stalled ribosomes mediated by trans-translation. Binds to transfer-messenger RNA (tmRNA), required for stable association of tmRNA with ribosomes. tmRNA and SmpB together mimic tRNA shape, replacing the anticodon stem-loop with SmpB. tmRNA is encoded by the ssrA gene; the 2 termini fold to resemble tRNA(Ala) and it encodes a 'tag peptide', a short internal open reading frame. During trans-translation Ala-aminoacylated tmRNA acts like a tRNA, entering the A-site of stalled ribosomes, displacing the stalled mRNA. The ribosome then switches to translate the ORF on the tmRNA; the nascent peptide is terminated with the 'tag peptide' encoded by the tmRNA and targeted for degradation. The ribosome is freed to recommence translation, which seems to be the essential function of trans-translation. This is SsrA-binding protein from Gluconacetobacter diazotrophicus (strain ATCC 49037 / DSM 5601 / CCUG 37298 / CIP 103539 / LMG 7603 / PAl5).